Consider the following 336-residue polypeptide: N-lysine methyltransferase KMT5A (336 aa).

Residues 1 to 112 (MGRGKKMSKP…KPSEQRETEC (112 aa)) form a disordered region. Over residues 67–93 (SVAHHESKCPGKPLTETRKKAEVEKKR) the composition is skewed to basic and acidic residues. In terms of domain architecture, SET spans 200 to 321 (EGMKMDMITG…VGEELLYDYG (122 aa)). Residues 210 to 212 (KGR), tyrosine 255, and 282 to 283 (NH) each bind S-adenosyl-L-methionine.

The protein belongs to the class V-like SAM-binding methyltransferase superfamily. Histone-lysine methyltransferase family. PR/SET subfamily.

It is found in the nucleus. Its subcellular location is the chromosome. The catalysed reaction is L-lysyl(20)-[histone H4] + S-adenosyl-L-methionine = N(6)-methyl-L-lysyl(20)-[histone H4] + S-adenosyl-L-homocysteine + H(+). The enzyme catalyses L-lysyl-[protein] + S-adenosyl-L-methionine = N(6)-methyl-L-lysyl-[protein] + S-adenosyl-L-homocysteine + H(+). Its function is as follows. Protein-lysine N-methyltransferase that monomethylates both histones and non-histone proteins. Specifically monomethylates 'Lys-20' of histone H4 (H4K20me1). H4K20me1 is enriched during mitosis and represents a specific tag for epigenetic transcriptional repression. Mainly functions in euchromatin regions, thereby playing a central role in the silencing of euchromatic genes. Required for cell proliferation, probably by contributing to the maintenance of proper higher-order structure of DNA during mitosis. Involved in chromosome condensation and proper cytokinesis. Nucleosomes are preferred as substrate compared to free histones. Mediates monomethylation of p53/TP53 at 'Lys-382', leading to repress p53/TP53-target genes. Plays a negative role in TGF-beta response regulation and a positive role in cell migration. The chain is N-lysine methyltransferase KMT5A from Xenopus tropicalis (Western clawed frog).